The primary structure comprises 249 residues: 23S rRNA (guanosine-2'-O-)-methyltransferase RlmB (249 aa).

Residues G200, I220, and L229 each coordinate S-adenosyl-L-methionine.

This sequence belongs to the class IV-like SAM-binding methyltransferase superfamily. RNA methyltransferase TrmH family. RlmB subfamily.

It is found in the cytoplasm. The catalysed reaction is guanosine(2251) in 23S rRNA + S-adenosyl-L-methionine = 2'-O-methylguanosine(2251) in 23S rRNA + S-adenosyl-L-homocysteine + H(+). Functionally, specifically methylates the ribose of guanosine 2251 in 23S rRNA. This chain is 23S rRNA (guanosine-2'-O-)-methyltransferase RlmB, found in Xanthomonas axonopodis pv. citri (strain 306).